Reading from the N-terminus, the 158-residue chain is Transcription elongation factor GreA (158 aa).

Belongs to the GreA/GreB family.

Its function is as follows. Necessary for efficient RNA polymerase transcription elongation past template-encoded arresting sites. The arresting sites in DNA have the property of trapping a certain fraction of elongating RNA polymerases that pass through, resulting in locked ternary complexes. Cleavage of the nascent transcript by cleavage factors such as GreA or GreB allows the resumption of elongation from the new 3'terminus. GreA releases sequences of 2 to 3 nucleotides. The chain is Transcription elongation factor GreA from Acinetobacter baumannii (strain SDF).